We begin with the raw amino-acid sequence, 212 residues long: Endonuclease III (212 aa).

In terms of domain architecture, HhH spans phenylalanine 108–asparagine 127. [4Fe-4S] cluster is bound by residues cysteine 187, cysteine 194, cysteine 197, and cysteine 203.

The protein belongs to the Nth/MutY family. The cofactor is [4Fe-4S] cluster.

It carries out the reaction 2'-deoxyribonucleotide-(2'-deoxyribose 5'-phosphate)-2'-deoxyribonucleotide-DNA = a 3'-end 2'-deoxyribonucleotide-(2,3-dehydro-2,3-deoxyribose 5'-phosphate)-DNA + a 5'-end 5'-phospho-2'-deoxyribonucleoside-DNA + H(+). DNA repair enzyme that has both DNA N-glycosylase activity and AP-lyase activity. The DNA N-glycosylase activity releases various damaged pyrimidines from DNA by cleaving the N-glycosidic bond, leaving an AP (apurinic/apyrimidinic) site. The AP-lyase activity cleaves the phosphodiester bond 3' to the AP site by a beta-elimination, leaving a 3'-terminal unsaturated sugar and a product with a terminal 5'-phosphate. In Rickettsia prowazekii (strain Madrid E), this protein is Endonuclease III.